A 395-amino-acid chain; its full sequence is Xylose isomerase (395 aa).

Active-site residues include His54 and Glu57. Positions 80 to 108 (AVPAGAGRDRHEGADGDDEPVHAPGCSRD) are disordered. Mg(2+) contacts are provided by Glu189, Glu225, His228, Asp253, Asp263, Asp265, and Asp295.

It belongs to the xylose isomerase family. In terms of assembly, homotetramer. The cofactor is Mg(2+).

The protein localises to the cytoplasm. The enzyme catalyses alpha-D-xylose = alpha-D-xylulofuranose. This is Xylose isomerase from Streptomyces lividans.